Reading from the N-terminus, the 347-residue chain is Selenide, water dikinase (347 aa).

Sec17 is an active-site residue. Sec17 is a non-standard amino acid (selenocysteine). ATP-binding positions include Lys20 and 48–50 (TAD). Asp51 is a binding site for Mg(2+). Residues Asp68, Asp91, and 139 to 141 (GHS) each bind ATP. Asp91 is a Mg(2+) binding site. Residue Asp227 participates in Mg(2+) binding.

Belongs to the selenophosphate synthase 1 family. Class I subfamily. As to quaternary structure, homodimer. Requires Mg(2+) as cofactor.

It carries out the reaction hydrogenselenide + ATP + H2O = selenophosphate + AMP + phosphate + 2 H(+). Synthesizes selenophosphate from selenide and ATP. The protein is Selenide, water dikinase of Haemophilus influenzae (strain 86-028NP).